Reading from the N-terminus, the 108-residue chain is UPF0060 membrane protein CJA_3703 (108 aa).

The next 4 membrane-spanning stretches (helical) occupy residues 6 to 26, 31 to 51, 61 to 81, and 85 to 105; these read LLFVVTALAEIIGCFLPYLWL, SIWLLLPAALSLALFAWLLTL, AAYGGVYVAVALLWLYWVDGV, and AYDWAGAAVALLGMAIIAMGW.

This sequence belongs to the UPF0060 family.

The protein resides in the cell inner membrane. The chain is UPF0060 membrane protein CJA_3703 from Cellvibrio japonicus (strain Ueda107) (Pseudomonas fluorescens subsp. cellulosa).